The primary structure comprises 133 residues: Large-conductance mechanosensitive channel (133 aa).

2 helical membrane passes run 19–39 and 79–99; these read IDLAVGVVIGGAFGKIVTSLV and IQSVVDFIIISFSIFLFVKLI.

It belongs to the MscL family. In terms of assembly, homopentamer.

The protein localises to the cell membrane. Functionally, channel that opens in response to stretch forces in the membrane lipid bilayer. May participate in the regulation of osmotic pressure changes within the cell. The chain is Large-conductance mechanosensitive channel from Clostridium tetani (strain Massachusetts / E88).